A 227-amino-acid polypeptide reads, in one-letter code: MLCNLIHNIHKEGYIIIMISFLLSCIGFAISCSLGIIFLVASLLCIYFFRDPIRIVPEGDHLIISPADGIILNIEQVNSPIDNSTQVLCISIFLNVLNVHVNRIPVSGTIKATEYIPGRFISASLNKSSELNERQRIVIESNVSHHTIIVDQIAGLIARRIVCNAYEGQNVNSGERFGIIRFGSRVNIYLPLNIHISAFKGQTVIGGETILAYLEDYPHKQLTAKFI.

S184 functions as the Schiff-base intermediate with substrate; via pyruvic acid in the catalytic mechanism. S184 carries the post-translational modification Pyruvic acid (Ser); by autocatalysis.

This sequence belongs to the phosphatidylserine decarboxylase family. PSD-A subfamily. As to quaternary structure, heterodimer of a large membrane-associated beta subunit and a small pyruvoyl-containing alpha subunit. Pyruvate serves as cofactor. Is synthesized initially as an inactive proenzyme. Formation of the active enzyme involves a self-maturation process in which the active site pyruvoyl group is generated from an internal serine residue via an autocatalytic post-translational modification. Two non-identical subunits are generated from the proenzyme in this reaction, and the pyruvate is formed at the N-terminus of the alpha chain, which is derived from the carboxyl end of the proenzyme. The post-translation cleavage follows an unusual pathway, termed non-hydrolytic serinolysis, in which the side chain hydroxyl group of the serine supplies its oxygen atom to form the C-terminus of the beta chain, while the remainder of the serine residue undergoes an oxidative deamination to produce ammonia and the pyruvoyl prosthetic group on the alpha chain.

It is found in the cell membrane. The catalysed reaction is a 1,2-diacyl-sn-glycero-3-phospho-L-serine + H(+) = a 1,2-diacyl-sn-glycero-3-phosphoethanolamine + CO2. The protein operates within phospholipid metabolism; phosphatidylethanolamine biosynthesis; phosphatidylethanolamine from CDP-diacylglycerol: step 2/2. Its function is as follows. Catalyzes the formation of phosphatidylethanolamine (PtdEtn) from phosphatidylserine (PtdSer). This Ehrlichia ruminantium (strain Gardel) protein is Phosphatidylserine decarboxylase proenzyme.